The chain runs to 422 residues: Mitogen-activated protein kinase spm1 (422 aa).

Positions Phe21–Leu314 constitute a Protein kinase domain. Residues Leu27–Val35 and Lys52 contribute to the ATP site. Catalysis depends on Asp149, which acts as the Proton acceptor. Position 186 is a phosphothreonine (Thr186). The TXY signature appears at Thr186–Tyr188. Tyr188 is modified (phosphotyrosine). The segment at Arg359–Asn422 is disordered. Positions Pro364 to Pro379 are enriched in polar residues. The span at Ser380–Ser397 shows a compositional bias: low complexity. Positions Ala411 to Asn422 are enriched in basic and acidic residues.

This sequence belongs to the protein kinase superfamily. CMGC Ser/Thr protein kinase family. MAP kinase subfamily. The cofactor is Mg(2+). In terms of processing, dually phosphorylated on Thr-186 and Tyr-188, which activates the enzyme.

The catalysed reaction is L-seryl-[protein] + ATP = O-phospho-L-seryl-[protein] + ADP + H(+). The enzyme catalyses L-threonyl-[protein] + ATP = O-phospho-L-threonyl-[protein] + ADP + H(+). Its activity is regulated as follows. Activated by tyrosine and threonine phosphorylation by skh1/pek1. Regulates cell integrity and functions coordinately with the protein kinase C pathway (pck1 and pck2). Involved the regulation of wall architecture, cell shape, cytokinesis in exponential and stationary phase, and metabolism of ions. The sequence is that of Mitogen-activated protein kinase spm1 (spm1) from Schizosaccharomyces pombe (strain 972 / ATCC 24843) (Fission yeast).